The primary structure comprises 191 residues: Hypoxanthine/guanine phosphoribosyltransferase (191 aa).

It belongs to the purine/pyrimidine phosphoribosyltransferase family. Archaeal HPRT subfamily. Homodimer.

The protein localises to the cytoplasm. It catalyses the reaction IMP + diphosphate = hypoxanthine + 5-phospho-alpha-D-ribose 1-diphosphate. It carries out the reaction GMP + diphosphate = guanine + 5-phospho-alpha-D-ribose 1-diphosphate. It participates in purine metabolism; IMP biosynthesis via salvage pathway; IMP from hypoxanthine: step 1/1. In terms of biological role, catalyzes a salvage reaction resulting in the formation of IMP that is energically less costly than de novo synthesis. The polypeptide is Hypoxanthine/guanine phosphoribosyltransferase (Methanocella paludicola (strain DSM 17711 / JCM 13418 / NBRC 101707 / SANAE)).